A 251-amino-acid polypeptide reads, in one-letter code: Small ribosomal subunit protein uS3 (251 aa).

A KH type-2 domain is found at 39–109; sequence IRNYVLARLK…EVKIDVVEVI (71 aa). Basic and acidic residues predominate over residues 221 to 239; that stretch reads EMKRMKDRRADSKSRPRDP. The tract at residues 221 to 251 is disordered; the sequence is EMKRMKDRRADSKSRPRDPRSKRRRSRTKRA. Over residues 240 to 251 the composition is skewed to basic residues; the sequence is RSKRRRSRTKRA.

The protein belongs to the universal ribosomal protein uS3 family. In terms of assembly, part of the 30S ribosomal subunit. Forms a tight complex with proteins S10 and S14.

Functionally, binds the lower part of the 30S subunit head. Binds mRNA in the 70S ribosome, positioning it for translation. The protein is Small ribosomal subunit protein uS3 of Chlorobium limicola (strain DSM 245 / NBRC 103803 / 6330).